Here is a 296-residue protein sequence, read N- to C-terminus: Tubulin polyglutamylase complex subunit 2 (296 aa).

The segment at 257–296 (KILIPKKKGPVQPVSGQKGPGPLAPPTSKPSAGCGNPVRK) is disordered.

As to quaternary structure, part of the neuronal tubulin polyglutamylase complex which contains TPGS1, TPGS2, TTLL1, LRRC49 and NICN1. Interacts with CSTPP1 and LRRC49.

The protein resides in the cytoplasm. The protein localises to the cytoskeleton. Its subcellular location is the microtubule organizing center. It is found in the centrosome. It localises to the centriolar satellite. Subunit of the tubulin polyglutamylase complex (TPGC). The complex mediates cilia and flagella polyglutamylation which is essential for their biogenesis and motility. The polypeptide is Tubulin polyglutamylase complex subunit 2 (Tpgs2) (Rattus norvegicus (Rat)).